Consider the following 425-residue polypeptide: Serine--tRNA ligase (425 aa).

233 to 235 (TAE) serves as a coordination point for L-serine. 264–266 (RRE) contributes to the ATP binding site. Position 287 (glutamate 287) interacts with L-serine. 351-354 (EISS) is a binding site for ATP. Residue serine 385 participates in L-serine binding.

The protein belongs to the class-II aminoacyl-tRNA synthetase family. Type-1 seryl-tRNA synthetase subfamily. In terms of assembly, homodimer. The tRNA molecule binds across the dimer.

Its subcellular location is the cytoplasm. The catalysed reaction is tRNA(Ser) + L-serine + ATP = L-seryl-tRNA(Ser) + AMP + diphosphate + H(+). It catalyses the reaction tRNA(Sec) + L-serine + ATP = L-seryl-tRNA(Sec) + AMP + diphosphate + H(+). Its pathway is aminoacyl-tRNA biosynthesis; selenocysteinyl-tRNA(Sec) biosynthesis; L-seryl-tRNA(Sec) from L-serine and tRNA(Sec): step 1/1. In terms of biological role, catalyzes the attachment of serine to tRNA(Ser). Is also able to aminoacylate tRNA(Sec) with serine, to form the misacylated tRNA L-seryl-tRNA(Sec), which will be further converted into selenocysteinyl-tRNA(Sec). The chain is Serine--tRNA ligase from Synechococcus sp. (strain WH7803).